Here is a 1024-residue protein sequence, read N- to C-terminus: Beta-galactosidase (1024 aa).

Residues Asn-103 and Asp-202 each contribute to the substrate site. Asp-202 contributes to the Na(+) binding site. The Mg(2+) site is built by Glu-417, His-419, and Glu-462. Residues Glu-462 and 538–541 contribute to the substrate site; that span reads EYAH. Residue Glu-462 is the Proton donor of the active site. The active-site Nucleophile is the Glu-538. A Mg(2+)-binding site is contributed by Asn-598. Residues Phe-602 and Asn-605 each coordinate Na(+). Residues Asn-605 and Trp-1000 each contribute to the substrate site.

It belongs to the glycosyl hydrolase 2 family. Homotetramer. The cofactor is Mg(2+). Na(+) serves as cofactor.

The enzyme catalyses Hydrolysis of terminal non-reducing beta-D-galactose residues in beta-D-galactosides.. This chain is Beta-galactosidase, found in Escherichia coli (strain SMS-3-5 / SECEC).